The sequence spans 1373 residues: MVSLRDNIEAQPLSHNRRIRKNFGHINLVADIPNLIEIQKNSYEKNFLQLNIKDSERKNKGLQSILNSIFPISDSSNIANLEFVKYEFDTPKYDVEECSQRSLSYAAPLKVTLRLSIWDIDEDTGTREIKGIKEQEVYMGDIPLMTKNGTFIINGTERVVVSQMHRSPGVFFYHDEGKVHSSGKLLYSARVIPYRGSWLDLEFDAKDVIYFRIDRKRKLYITTLLRAIGMSTEEIIKFYYNSVTYKLVKNKGWAVKFIPQHITAHRLTSDLVDADTGNILLKAGQKITPRLAKKYFGEGLNNILVAHETLIGKYLSEDLRDPTSDEVLAKIGEMITADMLNVINALKIKNVNVLVINPQSGPYIRNTLFADKNQDREAALCDIFRVLRPGEPANIEAAESLFYNLFFDVDRYDLSEVGRIKMNSRLELNISEEVTVLTIDDIKNIVRVLVELKDGKGIIDDIDHLGNRRVRSVGELIENQFRIGLVRMEKSVIERMSAGDVDTVMPHDLVNSKILVSVVKEFFNTSQLSQFMDQTNPLSEITHKRRLSALGPGGLSRDRAGFEVRDVHPTHYGRICPIETPEGQNIGLINSMATYARINKHGFIESPYRRVKDGCVTDEVVYLSAIEEGKYKIGQANSKVNKDGKLQGEFINCRVEGGNFVMVEPYEVDFIDVTPMQVVSVAASLIPFLENDDANRALMGSNMQRQAVPLIKTDAPFVGTGVEGVVAKDSGASVLALHDGIVEQVDSNRIVIRTLEQKVDGSPSVDIYNLLKFQKSNHNTCINQKPLVKVGHYVKKNDIIADGPSTDNGEIALGRNVLVAFLPWNGYNFEDSILISERIVKEDVFTSIHIEEFEVIARDTRLGPEEITRDIPNVSEEALRHLDEVGIIYIGAEVKAGDILVGKVTPKSESPITPEEKLLRAIFGEKAFDVKDSSLHVPSGVSGTVVEVRVFSRRGVEKDQRAIAIEKQQIEKLAKDRDDELEIIEHFVFSWLEKLLVGQVIINGPKQVKVGQTITTEMLKGLSKGQFWQITVEDANVMNEIEQIKTHYDEKKEALDKRFATKVEKLQSGDDLPQGALKVVKVFIATKHKLQPGDKMAGRHGNKGVISRIVPEEDMPFLEDGTVVDIVLNPLGLPSRMNIGQILETHLGWASINLAKKISTLVKEYKNKHIGIEQIKKFLIELYGENINSILERPEEEIISFCKKVSKGVHFATPVFDGAKVQDVKDMLKLAGQDPSGQVKLIDGRTGEYFDRLVTVGQKYLLKLHHLVDNKIHSRSIGPYSLVTQQPLGGKSHFGGQRFGEMECWALQAYGAAYTLQEMLTVKSDDVNGRIKTYDSIVRGENNFESGIPESFNVMIKEFRSLCLNVKLEVTSS.

It belongs to the RNA polymerase beta chain family. The RNAP catalytic core consists of 2 alpha, 1 beta, 1 beta' and 1 omega subunit. When a sigma factor is associated with the core the holoenzyme is formed, which can initiate transcription.

It carries out the reaction RNA(n) + a ribonucleoside 5'-triphosphate = RNA(n+1) + diphosphate. Its function is as follows. DNA-dependent RNA polymerase catalyzes the transcription of DNA into RNA using the four ribonucleoside triphosphates as substrates. The protein is DNA-directed RNA polymerase subunit beta of Rickettsia massiliae.